A 563-amino-acid chain; its full sequence is Arginine--tRNA ligase (563 aa).

It belongs to the class-I aminoacyl-tRNA synthetase family. As to quaternary structure, monomer.

The enzyme catalyses tRNA(Arg) + L-arginine + ATP = L-arginyl-tRNA(Arg) + AMP + diphosphate. The protein is Arginine--tRNA ligase of Encephalitozoon cuniculi (strain GB-M1) (Microsporidian parasite).